The sequence spans 196 residues: V-type proton ATPase proteolipid subunit (196 aa).

Over 1–25 (MFQLLSFLLSGEATAVERIITDACP) the chain is Lumenal. Residues 26–46 (VYAPFFGAMGVTAALVFTVMG) form a helical membrane-spanning segment. Over 47 to 72 (AAYGTAKASVGISNMGVMKPDLVIKA) the chain is Cytoplasmic. A helical membrane pass occupies residues 73–93 (FIPVIFAGVIAIYGLIICVIL). Over 94–111 (VGGIKPNANYTLMKSFTD) the chain is Lumenal. The chain crosses the membrane as a helical span at residues 112 to 132 (LGAGLTVGLCGLAAGMAIGIV). The Cytoplasmic portion of the chain corresponds to 133–150 (GDSGVRAFGQQPKLYVIM). A helical membrane pass occupies residues 151–171 (MLILIFSEALGLYGLIIGILL). Residues 172–196 (SSVSDTYCPGQALVPLNSGNVIGKN) lie on the Lumenal side of the membrane.

This sequence belongs to the V-ATPase proteolipid subunit family. As to quaternary structure, V-ATPase is a heteromultimeric enzyme composed of a peripheral catalytic V1 complex (main components: subunits A, B, C, D, E, and F) attached to an integral membrane V0 proton pore complex (main component: the proteolipid protein; which is present as a hexamer that forms the proton-conducting pore).

The protein localises to the vacuole membrane. Its function is as follows. Proton-conducting pore forming subunit of the membrane integral V0 complex of vacuolar ATPase. V-ATPase is responsible for acidifying a variety of intracellular compartments in eukaryotic cells. In Dictyostelium discoideum (Social amoeba), this protein is V-type proton ATPase proteolipid subunit (vatP).